The chain runs to 481 residues: Cysteine--tRNA ligase (481 aa).

Cysteine 29 contacts Zn(2+). The 'HIGH' region signature appears at 31–41 (VTVYDYCHIGH). Residues cysteine 209, histidine 234, and glutamate 238 each coordinate Zn(2+). Positions 266 to 270 (KMSKS) match the 'KMSKS' region motif. ATP is bound at residue lysine 269.

This sequence belongs to the class-I aminoacyl-tRNA synthetase family. In terms of assembly, monomer. It depends on Zn(2+) as a cofactor.

It is found in the cytoplasm. It catalyses the reaction tRNA(Cys) + L-cysteine + ATP = L-cysteinyl-tRNA(Cys) + AMP + diphosphate. The sequence is that of Cysteine--tRNA ligase from Syntrophotalea carbinolica (strain DSM 2380 / NBRC 103641 / GraBd1) (Pelobacter carbinolicus).